The following is a 159-amino-acid chain: Pathogenesis-related leaf protein 4 (159 aa).

The first 24 residues, 1-24 (MGLFNISLLLTCLMVLAIFHSCEA), serve as a signal peptide directing secretion. Glutamine 25 bears the Pyrrolidone carboxylic acid mark. One can recognise an SCP domain in the interval 32–147 (LAVHNDARAQ…NGWWFISCNY (116 aa)). 3 cysteine pairs are disulfide-bonded: cysteine 68–cysteine 136, cysteine 109–cysteine 115, and cysteine 131–cysteine 145.

Belongs to the CRISP family.

Functionally, probably involved in the defense reaction of plants against pathogens. This Solanum lycopersicum (Tomato) protein is Pathogenesis-related leaf protein 4.